We begin with the raw amino-acid sequence, 28 residues long: Conotoxin Cl6a (28 aa).

3 disulfide bridges follow: Cys-3/Cys-13, Cys-7/Cys-19, and Cys-12/Cys-24.

As to expression, expressed by the venom duct.

It localises to the secreted. In Californiconus californicus (California cone), this protein is Conotoxin Cl6a.